We begin with the raw amino-acid sequence, 797 residues long: Short transient receptor potential channel 4-associated protein (797 aa).

The residue at position 2 (Ala-2) is an N-acetylalanine. The interaction with TNFRSF1A stretch occupies residues 2–400; sequence AAAPAAAGAG…VLYVLCVLLM (399 aa).

As to quaternary structure, component of the DCX(TRPC4AP) E3 ubiquitin ligase complex, at least composed of CUL4A, DDB1, TRPC4AP/TRUSS and RBX1. Interacts with MYC. Constitutively associated with TNFRSF1A. Directly interacts with TRADD, TRAF2, CHUK, IKBKB and IKBKG. Interacts with TRPC1, TRPC4 and TRPC5. Phosphorylated by GSK3B; phosphorylation is required for ubiquitination. Post-translationally, ubiquitinated by a SCF (SKP1-CUL1-F-box protein) E3 ubiquitin-protein ligase containing SKP2, leading to its degradation. Phosphorylation by GSK3B is required for ubiquitination. As to expression, widely expressed, with high levels in heart, liver and testis.

Its subcellular location is the cytoplasm. It localises to the perinuclear region. Its pathway is protein modification; protein ubiquitination. Functionally, substrate-recognition component of a DCX (DDB1-CUL4-X-box) E3 ubiquitin-protein ligase complex required for cell cycle control. The DCX(TRPC4AP) complex specifically mediates the polyubiquitination and subsequent degradation of MYC as part of the DesCEND (destruction via C-end degrons) pathway. The DesCEND (destruction via C-end degrons) pathway recognizes a C-degron located at the extreme C terminus of target proteins, leading to their ubiquitination and degradation. The DCX(TRPC4AP) complex specifically recognizes proteins with an arginine at the minus 3 position (R-3 motif) at the C-terminus, such as MYC, leading to their ubiquitination and degradation. Also participates in the activation of NFKB1 in response to ligation of TNFRSF1A, possibly by linking TNFRSF1A to the IKK signalosome. Involved in JNK activation via its interaction with TRAF2. Also involved in elevation of endoplasmic reticulum Ca(2+) storage reduction in response to CHRM1. In Mus musculus (Mouse), this protein is Short transient receptor potential channel 4-associated protein.